Consider the following 227-residue polypeptide: Urease accessory protein UreF (227 aa).

It belongs to the UreF family. In terms of assembly, ureD, UreF and UreG form a complex that acts as a GTP-hydrolysis-dependent molecular chaperone, activating the urease apoprotein by helping to assemble the nickel containing metallocenter of UreC. The UreE protein probably delivers the nickel.

It localises to the cytoplasm. Required for maturation of urease via the functional incorporation of the urease nickel metallocenter. In Shewanella halifaxensis (strain HAW-EB4), this protein is Urease accessory protein UreF.